Reading from the N-terminus, the 236-residue chain is Auxin-responsive protein IAA16 (236 aa).

Residues 9-13 (LRLGL) carry the EAR-like (transcriptional repression) motif. The disordered stretch occupies residues 82-110 (KNVMSGQKPTTGDATEGNDKTSGSSGATS). Over residues 85 to 94 (MSGQKPTTGD) the composition is skewed to polar residues. Residues 118–218 (VAYVKVSMDG…SCKRIRIMKG (101 aa)) form the PB1 domain.

This sequence belongs to the Aux/IAA family. In terms of assembly, homodimers and heterodimers.

Its subcellular location is the nucleus. Functionally, aux/IAA proteins are short-lived transcriptional factors that function as repressors of early auxin response genes at low auxin concentrations. Repression is thought to result from the interaction with auxin response factors (ARFs), proteins that bind to the auxin-responsive promoter element (AuxRE). Formation of heterodimers with ARF proteins may alter their ability to modulate early auxin response genes expression. This is Auxin-responsive protein IAA16 (IAA16) from Arabidopsis thaliana (Mouse-ear cress).